The chain runs to 579 residues: Nif-specific regulatory protein (579 aa).

The region spanning 40 to 187 (DPVAEVPQIF…MVASLLEQAL (148 aa)) is the GAF domain. Residues 226–454 (IVGSSPAIAE…LENCVNRAAA (229 aa)) form the Sigma-54 factor interaction domain. ATP contacts are provided by residues 254-261 (GESGTGKE) and 317-326 (ADGGTLFLDE). The inter-domain linker stretch occupies residues 464 to 536 (EELACRQGAC…PLRTKTAQLS (73 aa)). Residues C468 and C473 each coordinate a divalent metal cation. The tract at residues 502–529 (RVSAPPPEPAPAPEPAPEAPPREEVPLR) is disordered. Tandem repeats lie at residues 505–506 (AP), 507–508 (PP), 509–510 (EP), 511–512 (AP), 513–514 (AP), 515–516 (EP), and 517–518 (AP). The tract at residues 505–518 (APPPEPAPAPEPAP) is 7 X 2 AA tandem repeats of X-P. The segment covering 505-520 (APPPEPAPAPEPAPEA) has biased composition (pro residues). The segment at 537–579 (REELLRALESAGWVQAKAARLLGMTPRQIAYALQKFEIELRKI) is C-terminal DNA-binding domain. Positions 551 to 570 (QAKAARLLGMTPRQIAYALQ) form a DNA-binding region, H-T-H motif.

As to quaternary structure, interacts with sigma-54.

Required for activation of most nif operons, which are directly involved in nitrogen fixation. In Rhodobacter capsulatus (strain ATCC BAA-309 / NBRC 16581 / SB1003), this protein is Nif-specific regulatory protein (nifA1).